We begin with the raw amino-acid sequence, 521 residues long: GMP synthase [glutamine-hydrolyzing] (521 aa).

The Glutamine amidotransferase type-1 domain maps to 8–203 (KILILDFGAQ…VVDVCGCQTL (196 aa)). C85 acts as the Nucleophile in catalysis. Active-site residues include H177 and E179. The region spanning 204-396 (WTAANIIDDQ…LGLPRTMVYR (193 aa)) is the GMPS ATP-PPase domain. ATP is bound at residue 231–237 (SGGVDSS).

Homodimer.

It carries out the reaction XMP + L-glutamine + ATP + H2O = GMP + L-glutamate + AMP + diphosphate + 2 H(+). Its pathway is purine metabolism; GMP biosynthesis; GMP from XMP (L-Gln route): step 1/1. In terms of biological role, catalyzes the synthesis of GMP from XMP. This is GMP synthase [glutamine-hydrolyzing] from Stenotrophomonas maltophilia (strain K279a).